Consider the following 376-residue polypeptide: Enoyl-[acyl-carrier-protein] reductase, mitochondrial (376 aa).

The N-terminal 12 residues, 1–12 (MLRTLRTSQLAR), are a transit peptide targeting the mitochondrion. The Proton donor role is filled by Tyr-79. NADP(+) contacts are provided by residues Asn-160, 183–186 (NSGV), 206–208 (RDR), 277–280 (YGGM), 302–304 (YWL), and Lys-368.

It belongs to the zinc-containing alcohol dehydrogenase family. Quinone oxidoreductase subfamily. As to quaternary structure, homodimer.

The protein resides in the mitochondrion matrix. The catalysed reaction is a 2,3-saturated acyl-[ACP] + NADP(+) = a (2E)-enoyl-[ACP] + NADPH + H(+). In terms of biological role, catalyzes the NADPH-dependent reduction of trans-2-enoyl thioesters in mitochondrial fatty acid synthesis (fatty acid synthesis type II). Fatty acid chain elongation in mitochondria uses acyl carrier protein (ACP) as an acyl group carrier, but the enzyme accepts both ACP and CoA thioesters as substrates in vitro. Required for respiration and the maintenance of the mitochondrial compartment. The protein is Enoyl-[acyl-carrier-protein] reductase, mitochondrial (ETR1) of Yarrowia lipolytica (strain CLIB 122 / E 150) (Yeast).